A 580-amino-acid chain; its full sequence is MAVRQALGRGLQLGRALLLRFAPKPGPVSGWGKPGPGAAWGRGERPGRVSSPGAQPRPLGLPLPDRYRFFRQSVAGLAARIQRQFVVRARGGAGPCGRAVFLAFGLGLGLIEEKQAESRRAASACQEIQAIFTQKNKQVSDPLDTRRWQGFRLEDYLIGQAIGKGCNAAVYEATMPTLPQHLEKAKHLGLLGKGPDVVSKGADGEQAPGAPAFPFAIKMMWNISAGSSSEAILSKMSQELVPASRMALDGEYGAVTYRRSRDGPKQLAPHPNIIRVFRAFTSSVPLLPGALADYPDMLPPHYYPEGLGHGRTLFLVMKNYPCTLRQYLEEQTPSSRLATMMTLQLLEGVDHLVQQGIAHRDLKSDNILVEWDSDGCPWLVISDFGCCLADERVGLQLPFNSSSVERGGNGSLMAPEVSTAHSGPHAVIDYSKADTWAVGAIAYEIFGLANPFYGQGSAHLESRSYQEAQLPEMPKSVPPETRQLVRSLLQREANKRPSARIAANVLHLSLWGEHLLALKNLKLDKMIAWLLQQSAATLLADRLREKSCVETKLQMLFLANLECEALCQAALLLSSWRAAP.

The N-terminal 77 residues, 1–77, are a transit peptide targeting the mitochondrion; the sequence is MAVRQALGRG…RFFRQSVAGL (77 aa). The disordered stretch occupies residues 28-60; that stretch reads VSGWGKPGPGAAWGRGERPGRVSSPGAQPRPLG. Residues 94–110 traverse the membrane as a helical segment; it reads GPCGRAVFLAFGLGLGL. The interval 111-117 is required for outer membrane localization; the sequence is IEEKQAE. Residues 156 to 510 enclose the Protein kinase domain; it reads YLIGQAIGKG…IAANVLHLSL (355 aa). ATP is bound by residues 162–170 and Lys218; that span reads IGKGCNAAV. Ser227 carries the phosphoserine; by autocatalysis modification. The active-site Proton acceptor is the Asp361. A Phosphoserine; by autocatalysis modification is found at Ser401.

Belongs to the protein kinase superfamily. Ser/Thr protein kinase family. As to quaternary structure, upon mitochondrial depolarization, it forms a supercomplex with TOM and TIM23 complexes. PINK1-TOM-TIM23 supercomplex formation requires PINK1 interaction with TOMM20 and TOMM70 and is critical for PINK1 stabilization at the outer mitochondrial membrane, kinase activation and downstream mitophagy. Upon mitochondrial depolarization, interacts with TIMM23; the interaction is required for PINK1 accumulation at the outer mitochondrial membrane, kinase activation by autophosphorylation and PRKN recruitement to mitochondria. Interacts with PRKN. Interacts with FBXO7. Forms a complex with PRKN and PARK7. Interacts with NENF. The cofactor is Mg(2+). Proteolytically cleaved. In healthy cells, the precursor is continuously imported into the inner mitochondrial membrane (IMM), where it is proteolytically cleaved by mitochondrial-processing peptidase (MPP) and then undergoes further proteolytic cleavage by PARL or AFG3L2 to give rise to the 52 kDa short form. The 52 kDa short form is then released into the cytosol where it rapidly undergoes proteasome-dependent degradation. In unhealthy cells, when cellular stress conditions lead to the loss of mitochondrial membrane potential, mitochondrial import is impaired leading to the precursor accumulating on the outer mitochondrial membrane (OMM). If accumulation at the OMM fails and it is imported into the depolarized mitochondria, it undergoes cleavage by the IMM protease OMA1, promoting its subsequent degradation by the proteasome. Post-translationally, autophosphorylated. Loss of mitochondrial membrane potential results in the precursor accumulating on the outer mitochondrial membrane (OMM) where it is activated by autophosphorylation. Autophosphorylation at Ser-227 and Ser-401 is sufficient and essential for selective recruitment of PRKN to depolarized mitochondria, via PINK1-dependent phosphorylation of ubiquitin and maybe PRKN.

It localises to the mitochondrion outer membrane. It is found in the mitochondrion inner membrane. The protein localises to the cytoplasm. The protein resides in the cytosol. The enzyme catalyses L-seryl-[protein] + ATP = O-phospho-L-seryl-[protein] + ADP + H(+). The catalysed reaction is L-threonyl-[protein] + ATP = O-phospho-L-threonyl-[protein] + ADP + H(+). In terms of biological role, serine/threonine-protein kinase which acts as a sensor of mitochondrial damage and protects against mitochondrial dysfunction during cellular stress. It phosphorylates mitochondrial proteins to coordinate mitochondrial quality control mechanisms that remove and replace dysfunctional mitochondrial components. Depending on the severity of mitochondrial damage, activity ranges from preventing apoptosis and stimulating mitochondrial biogenesis to eliminating severely damaged mitochondria via PINK1-PRKN-dependent mitophagy. When cellular stress results in irreversible mitochondrial damage, PINK1 accumulates at the outer mitochondrial membrane (OMM) where it phosphorylates pre-existing polyubiquitin chains at 'Ser-65', recruits PRKN from the cytosol to the OMM and activates PRKN by phosphorylation at 'Ser-65'; activated PRKN then ubiquinates VDAC1 and other OMM proteins to initiate mitophagy. The PINK1-PRKN pathway also promotes fission of damaged mitochondria through phosphorylation and PRKN-dependent degradation of mitochondrial proteins involved in fission such as MFN2. This prevents the refusion of unhealthy mitochondria with the mitochondrial network or initiates mitochondrial fragmentation facilitating their later engulfment by autophagosomes. Also promotes mitochondrial fission independently of PRKN and ATG7-mediated mitophagy, via the phosphorylation and activation of DNM1L. Regulates motility of damaged mitochondria by promoting the ubiquitination and subsequent degradation of MIRO1 and MIRO2; in motor neurons, this likely inhibits mitochondrial intracellular anterograde transport along the axons which probably increases the chance of the mitochondria undergoing mitophagy in the soma. Required for ubiquinone reduction by mitochondrial complex I by mediating phosphorylation of complex I subunit NDUFA10. Phosphorylates LETM1, positively regulating its mitochondrial calcium transport activity. This is Serine/threonine-protein kinase PINK1, mitochondrial from Rattus norvegicus (Rat).